Here is a 180-residue protein sequence, read N- to C-terminus: Trichosurin (180 aa).

Residues 1-15 (MKLLLLSMGLALVCG) form the signal peptide. Asn-67 and Asn-148 each carry an N-linked (GlcNAc...) asparagine glycan. Cysteines 87 and 180 form a disulfide.

Belongs to the calycin superfamily. Lipocalin family. As to quaternary structure, homodimer. As to expression, milk.

It localises to the secreted. This chain is Trichosurin, found in Trichosurus vulpecula (Brush-tailed possum).